We begin with the raw amino-acid sequence, 713 residues long: Elongation factor G (713 aa).

The 283-residue stretch at 8-290 folds into the tr-type G domain; it reads ERYRNFGIMA…GVIQLLPSPV (283 aa). GTP-binding positions include 17 to 24, 88 to 92, and 142 to 145; these read AHIDAGKT, DTPGH, and NKMD.

Belongs to the TRAFAC class translation factor GTPase superfamily. Classic translation factor GTPase family. EF-G/EF-2 subfamily.

Its subcellular location is the cytoplasm. Catalyzes the GTP-dependent ribosomal translocation step during translation elongation. During this step, the ribosome changes from the pre-translocational (PRE) to the post-translocational (POST) state as the newly formed A-site-bound peptidyl-tRNA and P-site-bound deacylated tRNA move to the P and E sites, respectively. Catalyzes the coordinated movement of the two tRNA molecules, the mRNA and conformational changes in the ribosome. The protein is Elongation factor G of Stenotrophomonas maltophilia (strain K279a).